The sequence spans 204 residues: 3-isopropylmalate dehydratase small subunit (204 aa).

This sequence belongs to the LeuD family. LeuD type 1 subfamily. In terms of assembly, heterodimer of LeuC and LeuD.

The enzyme catalyses (2R,3S)-3-isopropylmalate = (2S)-2-isopropylmalate. Its pathway is amino-acid biosynthesis; L-leucine biosynthesis; L-leucine from 3-methyl-2-oxobutanoate: step 2/4. Its function is as follows. Catalyzes the isomerization between 2-isopropylmalate and 3-isopropylmalate, via the formation of 2-isopropylmaleate. This chain is 3-isopropylmalate dehydratase small subunit, found in Chloroflexus aggregans (strain MD-66 / DSM 9485).